The sequence spans 112 residues: Putative pterin-4-alpha-carbinolamine dehydratase (112 aa).

Belongs to the pterin-4-alpha-carbinolamine dehydratase family.

It catalyses the reaction (4aS,6R)-4a-hydroxy-L-erythro-5,6,7,8-tetrahydrobiopterin = (6R)-L-erythro-6,7-dihydrobiopterin + H2O. This Shewanella baltica (strain OS223) protein is Putative pterin-4-alpha-carbinolamine dehydratase.